A 562-amino-acid polypeptide reads, in one-letter code: Probable malate:quinone oxidoreductase (562 aa).

The disordered stretch occupies residues 530-562 (EVPDKSATPPDPTIAPKHQHSPTHNANSEMQAL). Positions 551–562 (PTHNANSEMQAL) are enriched in polar residues.

The protein belongs to the MQO family. Requires FAD as cofactor.

The catalysed reaction is (S)-malate + a quinone = a quinol + oxaloacetate. Its pathway is carbohydrate metabolism; tricarboxylic acid cycle; oxaloacetate from (S)-malate (quinone route): step 1/1. The polypeptide is Probable malate:quinone oxidoreductase (Xylella fastidiosa (strain 9a5c)).